The primary structure comprises 249 residues: NADH dehydrogenase [ubiquinone] flavoprotein 2, mitochondrial (249 aa).

Residues 1–32 constitute a mitochondrion transit peptide; sequence MFLSAALRARAAGLAAHWGKHIRNLHKTAVQN. At lysine 61 the chain carries N6-acetyllysine. 4 residues coordinate [2Fe-2S] cluster: cysteine 135, cysteine 140, cysteine 176, and cysteine 180. Tyrosine 193 carries the phosphotyrosine; by SRC modification. The tract at residues 213–249 is disordered; it reads IPKPGPRSGRFSCEPAGGLTSLTEPPKGPGFGVQAGL.

This sequence belongs to the complex I 24 kDa subunit family. As to quaternary structure, core subunit of respiratory chain NADH dehydrogenase (Complex I) which is composed of 45 different subunits. This is a component of the flavoprotein-sulfur (FP) fragment of the enzyme. [2Fe-2S] cluster serves as cofactor.

The protein resides in the mitochondrion inner membrane. The enzyme catalyses a ubiquinone + NADH + 5 H(+)(in) = a ubiquinol + NAD(+) + 4 H(+)(out). Its function is as follows. Core subunit of the mitochondrial membrane respiratory chain NADH dehydrogenase (Complex I) which catalyzes electron transfer from NADH through the respiratory chain, using ubiquinone as an electron acceptor. Parts of the peripheral arm of the enzyme, where the electrons from NADH are accepted by flavin mononucleotide (FMN) and then passed along a chain of iron-sulfur clusters by electron tunnelling to the final acceptor ubiquinone. Contains one iron-sulfur cluster. The chain is NADH dehydrogenase [ubiquinone] flavoprotein 2, mitochondrial (NDUFV2) from Bos taurus (Bovine).